The primary structure comprises 132 residues: Large ribosomal subunit protein uL24 (132 aa).

Belongs to the universal ribosomal protein uL24 family. Part of the 50S ribosomal subunit.

One of two assembly initiator proteins, it binds directly to the 5'-end of the 23S rRNA, where it nucleates assembly of the 50S subunit. In terms of biological role, one of the proteins that surrounds the polypeptide exit tunnel on the outside of the subunit. In Synechococcus sp. (strain JA-3-3Ab) (Cyanobacteria bacterium Yellowstone A-Prime), this protein is Large ribosomal subunit protein uL24.